Consider the following 141-residue polypeptide: Large ribosomal subunit protein uL11 (141 aa).

This sequence belongs to the universal ribosomal protein uL11 family. As to quaternary structure, part of the ribosomal stalk of the 50S ribosomal subunit. Interacts with L10 and the large rRNA to form the base of the stalk. L10 forms an elongated spine to which L12 dimers bind in a sequential fashion forming a multimeric L10(L12)X complex. In terms of processing, one or more lysine residues are methylated.

Functionally, forms part of the ribosomal stalk which helps the ribosome interact with GTP-bound translation factors. This Helicobacter pylori (strain P12) protein is Large ribosomal subunit protein uL11.